Reading from the N-terminus, the 388-residue chain is Processive diacylglycerol beta-glucosyltransferase (388 aa).

It belongs to the glycosyltransferase 28 family. UgtP subfamily.

It localises to the cell membrane. It carries out the reaction a 1,2-diacyl-3-O-(beta-D-glucopyranosyl)-sn-glycerol + UDP-alpha-D-glucose = a 1,2-diacyl-3-O-(beta-D-Glc-(1-&gt;6)-beta-D-Glc)-sn-glycerol + UDP + H(+). The catalysed reaction is a 1,2-diacyl-3-O-(beta-D-Glc-(1-&gt;6)-beta-D-Glc)-sn-glycerol + UDP-alpha-D-glucose = a 1,2-diacyl-3-O-(beta-D-Glc-(1-&gt;6)-beta-D-Glc-(1-&gt;6)-beta-D-Glc)-sn-glycerol + UDP + H(+). It catalyses the reaction a 1,2-diacyl-sn-glycerol + UDP-alpha-D-glucose = a 1,2-diacyl-3-O-(beta-D-glucopyranosyl)-sn-glycerol + UDP + H(+). It functions in the pathway glycolipid metabolism; diglucosyl-diacylglycerol biosynthesis. Functionally, processive glucosyltransferase involved in the biosynthesis of both the bilayer- and non-bilayer-forming membrane glucolipids. Is able to successively transfer up to three glucosyl residues to diacylglycerol (DAG), thereby catalyzing the formation of beta-monoglucosyl-DAG (3-O-(beta-D-glucopyranosyl)-1,2-diacyl-sn-glycerol), beta-diglucosyl-DAG (3-O-(beta-D-glucopyranosyl-beta-(1-&gt;6)-D-glucopyranosyl)-1,2-diacyl-sn-glycerol) and beta-triglucosyl-DAG (3-O-(beta-D-glucopyranosyl-beta-(1-&gt;6)-D-glucopyranosyl-beta-(1-&gt;6)-D-glucopyranosyl)-1,2-diacyl-sn-glycerol). Beta-diglucosyl-DAG is the predominant glycolipid found in Bacillales and is also used as a membrane anchor for lipoteichoic acid (LTA). This chain is Processive diacylglycerol beta-glucosyltransferase, found in Bacillus cereus (strain G9842).